A 397-amino-acid polypeptide reads, in one-letter code: Putative nickel insertion protein (397 aa).

The protein belongs to the LarC family.

This is Putative nickel insertion protein from Synechococcus sp. (strain JA-2-3B'a(2-13)) (Cyanobacteria bacterium Yellowstone B-Prime).